The primary structure comprises 471 residues: Probable anion transporter 5, chloroplastic (471 aa).

Residues 1-59 (MAASASASALQAERCLLVGVGAGPRRHRLPLRMPPPLHAPPALLLLPHRRRRRWPPAVR) constitute a chloroplast transit peptide. Positions 56-76 (PAVRASPGEGGGGGGGGGGGG) are disordered. Transmembrane regions (helical) follow at residues 62 to 82 (PGEG…AGAL), 103 to 123 (IGVV…GFMP), 162 to 182 (VVFG…PPII), and 185 to 205 (LGWE…CLGF). Residues 63-76 (GEGGGGGGGGGGGG) show a composition bias toward gly residues. The interval 226–247 (GQSPSGSSDLISSSVSPKSSES) is disordered. The span at 228–247 (SPSGSSDLISSSVSPKSSES) shows a compositional bias: low complexity. The next 6 helical transmembrane spans lie at 270–290 (VWAM…CLSW), 307–327 (AWVS…AAPF), 348–368 (IAFL…GVPP), 371–391 (IVAF…GLYC), 403–423 (ILLG…VALT), and 435–455 (ISLF…WLAF).

The protein belongs to the major facilitator superfamily. Sodium/anion cotransporter (TC 2.A.1.14) family.

The protein resides in the plastid. The protein localises to the chloroplast membrane. Probable anion transporter. The sequence is that of Probable anion transporter 5, chloroplastic (PHT4;5) from Oryza sativa subsp. japonica (Rice).